The chain runs to 718 residues: SANT and BTB domain regulator of class switch recombination (718 aa).

The region spanning 21–59 (DMILYPLIGIPQTINWETVARLVPGLTPKECVKRFDELK) is the SANT domain. The 109-residue stretch at 147–255 (MVIHVCDEAK…QCIQYCHKNM (109 aa)) folds into the BTB domain. Residues 555–576 (SEEEEYTTGSEVTEDEVGDEEE) are compositionally biased toward acidic residues. Disordered stretches follow at residues 555 to 622 (SEEE…SPFV) and 690 to 718 (RASV…GRPA). Positions 580–595 (KQRKKEKPKKFTKPPK) are enriched in basic residues. A compositionally biased stretch (basic and acidic residues) spans 604–615 (QKKEKTLEKSTS).

Belongs to the KIAA1841 family. As to quaternary structure, homodimer. Interacts (via the BTB domain) with HDAC1 and NCOR2.

Negatively regulates class switch recombination or isotype switching in splenic B-cells. The polypeptide is SANT and BTB domain regulator of class switch recombination (Mus musculus (Mouse)).